The following is a 157-amino-acid chain: Large ribosomal subunit protein uL15 (157 aa).

The disordered stretch occupies residues 1-40; the sequence is MKLHELSDNPGATKKRMRIGRGPGSGKGKMGGRGIKGQKS. Residues 21–35 are compositionally biased toward gly residues; it reads RGPGSGKGKMGGRGI.

It belongs to the universal ribosomal protein uL15 family. As to quaternary structure, part of the 50S ribosomal subunit.

Binds to the 23S rRNA. The sequence is that of Large ribosomal subunit protein uL15 from Ruegeria pomeroyi (strain ATCC 700808 / DSM 15171 / DSS-3) (Silicibacter pomeroyi).